The primary structure comprises 706 residues: Termination factor NPH-I homolog (706 aa).

The Helicase ATP-binding domain occupies 62–227; sequence IGQGENTRGL…VPCFNMLSGR (166 aa). Residue 75 to 82 participates in ATP binding; that stretch reads HQMGMGKT. Positions 168 to 171 match the DEAH box motif; that stretch reads DEAH. The 183-residue stretch at 417 to 599 folds into the Helicase C-terminal domain; that stretch reads QCLQPLKVLE…HLNSAFRDLL (183 aa).

This sequence belongs to the DEAD box helicase family. DEAH subfamily. In terms of assembly, part of the viral DNA-directed RNA polymerase that consists of 8 polII-like subunits (RPB1, RPB2, RPB3, RPB5, RPB6, RPB7, RPB9, RPB10), a capping enzyme and a termination factor.

The protein localises to the virion. Its function is as follows. Putative DNA-dependent ATPase required for providing the needed energy to achieve the termination of early transcripts. The sequence is that of Termination factor NPH-I homolog from African swine fever virus (isolate Tick/South Africa/Pretoriuskop Pr4/1996) (ASFV).